The sequence spans 149 residues: Large ribosomal subunit protein uL13 (149 aa).

It belongs to the universal ribosomal protein uL13 family. As to quaternary structure, part of the 50S ribosomal subunit.

Its function is as follows. This protein is one of the early assembly proteins of the 50S ribosomal subunit, although it is not seen to bind rRNA by itself. It is important during the early stages of 50S assembly. The sequence is that of Large ribosomal subunit protein uL13 from Borrelia recurrentis (strain A1).